A 60-amino-acid polypeptide reads, in one-letter code: MELVKVVFMGWFKNESMFTKEITMMKDDVQWATTQYAEVNKALVKAFIDDKKVCEVDCRG.

In terms of assembly, can form a complex with non-cognate host toxins LsoA and RnlA.

Antitoxin component of a potential type II toxin-antitoxin (TA) system. Acts as an antitoxin against host toxins RnlA and LsoA, preventing them from degrading T4 bacteriophage-derived mRNA and thus permitting successful virus infection. Stabilizes middle (8-10 minutes) and late (18 to 28 minutes) T4 gene transcripts. The polypeptide is Antitoxin Dmd (dmd) (Escherichia coli (Bacteriophage T4)).